The primary structure comprises 337 residues: Heat-inducible transcription repressor HrcA (337 aa).

Belongs to the HrcA family.

In terms of biological role, negative regulator of class I heat shock genes (grpE-dnaK-dnaJ and groELS operons). Prevents heat-shock induction of these operons. This is Heat-inducible transcription repressor HrcA from Kocuria rhizophila (strain ATCC 9341 / DSM 348 / NBRC 103217 / DC2201).